Reading from the N-terminus, the 299-residue chain is Coenzyme PQQ synthesis protein B (299 aa).

This sequence belongs to the PqqB family.

It participates in cofactor biosynthesis; pyrroloquinoline quinone biosynthesis. Its function is as follows. May be involved in the transport of PQQ or its precursor to the periplasm. The chain is Coenzyme PQQ synthesis protein B from Methylorubrum populi (strain ATCC BAA-705 / NCIMB 13946 / BJ001) (Methylobacterium populi).